A 324-amino-acid chain; its full sequence is Homocysteine S-methyltransferase 1 (324 aa).

The 315-residue stretch at 6 to 320 folds into the Hcy-binding domain; it reads IKELIVEHPG…KDIAEIASAV (315 aa). Zn(2+) is bound by residues cysteine 238, cysteine 305, and cysteine 306.

Requires Zn(2+) as cofactor.

The protein resides in the cytoplasm. The enzyme catalyses S-methyl-L-methionine + L-homocysteine = 2 L-methionine + H(+). Functionally, homocysteine S-methyltransferase involved in the conversion of S-adenosylmethionine (AdoMet) to methionine to control the methionine/AdoMet ratio. Also converts S-methylmethionine (SMM) to methionine. This chain is Homocysteine S-methyltransferase 1 (MHT1), found in Saccharomyces cerevisiae (strain ATCC 204508 / S288c) (Baker's yeast).